The sequence spans 909 residues: SCY1-like protein 2 B (909 aa).

Positions 39-343 (YELLDQIGSA…ALDFTGSNFF (305 aa)) constitute a Protein kinase domain. HEAT repeat units follow at residues 311-348 (SIPS…SDAR), 350-382 (RALR…DFDS), 383-401 (RVLR…RNLV), 402-439 (LQPI…TASG), 465-502 (VLPL…VVRQ), 499-537 (VVRQ…TLDK), and 578-617 (FTAE…KIEE). 2 disordered regions span residues 624-772 (NDSG…VAST) and 804-909 (SASL…LDLL). Polar residues-rich tracts occupy residues 638 to 648 (NGLQFQSSTQI), 678 to 712 (PASS…TAPT), 724 to 747 (RQSS…TSFA), 804 to 828 (SASL…QDPL), and 835 to 852 (KQSQ…NNQK).

It belongs to the protein kinase superfamily. Interacts with VTI11, VTI12 and CHC1. As to expression, expressed in roots, seedlings, leaves, stems, flowers, and, at low levels, in siliques.

It is found in the golgi apparatus membrane. The protein localises to the golgi apparatus. Its subcellular location is the trans-Golgi network membrane. The protein resides in the prevacuolar compartment membrane. Its function is as follows. Probably inactive kinase. Component of the AP2-containing clathrin coat that regulates clathrin-dependent trafficking at plasma membrane, TGN and endosomal system. Together with SCYL2B, required for cell growth, plant growth and development. Essential for polarized root hair development probably by mediating the root hair tip localization of cellulose synthase-like D3 (CSLD3). The polypeptide is SCY1-like protein 2 B (Arabidopsis thaliana (Mouse-ear cress)).